The following is a 365-amino-acid chain: Bifunctional chorismate mutase/prephenate dehydratase (365 aa).

The region spanning 1 to 96 (MADQDQLKAL…SCLALEQPLK (96 aa)) is the Chorismate mutase domain. Positions 11, 28, 39, and 57 each coordinate substrate. Residues 97–272 (VAYLGPEGTF…NSTRFLIIGN (176 aa)) enclose the Prephenate dehydratase domain. An ACT domain is found at 284 to 361 (SIIVSMRNKP…VALKVLGSYP (78 aa)).

It is found in the cytoplasm. The catalysed reaction is chorismate = prephenate. It catalyses the reaction prephenate + H(+) = 3-phenylpyruvate + CO2 + H2O. The protein operates within amino-acid biosynthesis; L-phenylalanine biosynthesis; phenylpyruvate from prephenate: step 1/1. Its pathway is metabolic intermediate biosynthesis; prephenate biosynthesis; prephenate from chorismate: step 1/1. Its function is as follows. Catalyzes the Claisen rearrangement of chorismate to prephenate and the decarboxylation/dehydration of prephenate to phenylpyruvate. In Pseudomonas aeruginosa (strain ATCC 15692 / DSM 22644 / CIP 104116 / JCM 14847 / LMG 12228 / 1C / PRS 101 / PAO1), this protein is Bifunctional chorismate mutase/prephenate dehydratase (pheA).